We begin with the raw amino-acid sequence, 37 residues long: Large ribosomal subunit protein bL36A (37 aa).

The protein belongs to the bacterial ribosomal protein bL36 family.

The sequence is that of Large ribosomal subunit protein bL36A from Methylobacillus flagellatus (strain ATCC 51484 / DSM 6875 / VKM B-1610 / KT).